Consider the following 687-residue polypeptide: Protein SDA1 homolog (687 aa).

Disordered stretches follow at residues 517–549, 561–587, and 615–687; these read SSDE…SQMR, MKQL…EPQG, and TVIA…KSKI. Residues 520–537 show a composition bias toward acidic residues; the sequence is EEQEDEDPSGENQEGEED. A compositionally biased stretch (basic residues) spans 644 to 666; the sequence is EKRRKKNFMMMRHNKLVRGKTKR. Residues 667 to 680 are compositionally biased toward basic and acidic residues; that stretch reads SFRDKQIALRDSLL.

Belongs to the SDA1 family.

Its subcellular location is the nucleus. It localises to the nucleolus. In terms of biological role, required for 60S pre-ribosomal subunits export to the cytoplasm. The polypeptide is Protein SDA1 homolog (sdad1) (Nematostella vectensis (Starlet sea anemone)).